Reading from the N-terminus, the 1064-residue chain is Protein NLRC3 (1064 aa).

The 322-residue stretch at 138-459 folds into the NACHT domain; the sequence is RVSLTIGVAG…YCFIHLSLQE (322 aa). 144 to 151 provides a ligand contact to ATP; the sequence is GVAGVGKT. LRR repeat units follow at residues 338–362, 570–593, 632–662, 664–687, 692–715, 720–743, 748–771, 776–799, 804–827, 832–855, 860–883, 888–911, 916–939, 972–995, 1000–1022, and 1028–1051; these read LGHL…LCEL, LSEL…TLAG, LPQL…VLSG, DCRI…ALAR, NRSL…ALAD, NRTL…CVAE, NQTI…QMAD, NRSL…ALAE, NQIL…VLMR, NQTL…ALTQ, NNTL…AIAV, NHSL…ALGQ, NRTL…SVAG, NRTL…ALAN, NSSL…IFVA, and NHGL…MISE.

Belongs to the NLRP family. Directly interacts (via CARD) with TMEM173/STING; this interaction reduces TMEM173 trafficking to the perinuclear region in response to interferon stimulatory DNA. Also interacts, but to a lesser extent, with TBK1. Interacts with TRAF6; this interaction results in decreased TRAF6 'Lys-63'-linked polyubiquitination, but leaves 'Lys-48'-linked chains unchanged, promoting TRAF6 protein degradation. Interacts with PIK3R1/PIK3R2; this interaction disrupts the association between PIK3R1/PIK3R2 and the p110 catalytic subunit PIK3CA/PIK3CB/PIK3CD and reduces PIK3R1/PIK3R2 activation. Weakly interacts with PYCARD/ASC. Interacts with CASP1 and CASP5. As to expression, expressed in bone marrow-derived macrophages.

Its subcellular location is the cytoplasm. Its function is as follows. Negative regulator of the innate immune response. Attenuates signaling pathways activated by Toll-like receptors (TLRs) and the DNA sensor STING/TMEM173 in response to pathogen-associated molecular patterns, such as intracellular poly(dA:dT), but not poly(I:C), or in response to DNA virus infection, including that of Herpes simplex virus 1 (HSV1). May affect TLR4 signaling by acting at the level of TRAF6 ubiquitination, decreasing the activating 'Lys-63'-linked ubiquitination and leaving unchanged the degradative 'Lys-48'-linked ubiquitination. Inhibits the PI3K-AKT-mTOR pathway possibly by directly interacting with the posphatidylinositol 3-kinase regulatory subunit p85 (PIK3R1/PIK3R2) and disrupting the association between PIK3R1/PIK3R2 and the catalytic subunit p110 (PIK3CA/PIK3CB/PIK3CD) and reducing PIK3R1/PIK3R2 activation. Via its regulation of the PI3K-AKT-mTOR pathway, controls cell proliferation, predominantly in intestinal epithelial cells. May also affect NOD1- or NOD2-mediated NF-kappa-B activation. Might also affect the inflammatory response by preventing NLRP3 inflammasome formation, CASP1 cleavage and IL1B maturation. This Mus musculus (Mouse) protein is Protein NLRC3 (Nlrc3).